A 412-amino-acid chain; its full sequence is CCA-adding enzyme (412 aa).

ATP-binding residues include Ser-41 and Lys-44. CTP-binding residues include Ser-41 and Lys-44. 3 residues coordinate Mg(2+): Asp-53, Asp-55, and Asp-106. Residues His-129, Lys-149, and Tyr-158 each coordinate ATP. CTP is bound by residues His-129, Lys-149, and Tyr-158.

It belongs to the tRNA nucleotidyltransferase/poly(A) polymerase family. Archaeal CCA-adding enzyme subfamily. In terms of assembly, homodimer. Requires Mg(2+) as cofactor.

It carries out the reaction a tRNA precursor + 2 CTP + ATP = a tRNA with a 3' CCA end + 3 diphosphate. It catalyses the reaction a tRNA with a 3' CCA end + 2 CTP + ATP = a tRNA with a 3' CCACCA end + 3 diphosphate. Functionally, catalyzes the addition and repair of the essential 3'-terminal CCA sequence in tRNAs without using a nucleic acid template. Adds these three nucleotides in the order of C, C, and A to the tRNA nucleotide-73, using CTP and ATP as substrates and producing inorganic pyrophosphate. tRNA 3'-terminal CCA addition is required both for tRNA processing and repair. Also involved in tRNA surveillance by mediating tandem CCA addition to generate a CCACCA at the 3' terminus of unstable tRNAs. While stable tRNAs receive only 3'-terminal CCA, unstable tRNAs are marked with CCACCA and rapidly degraded. This is CCA-adding enzyme from Saccharolobus islandicus (strain M.16.27) (Sulfolobus islandicus).